A 319-amino-acid polypeptide reads, in one-letter code: tRNA pseudouridine synthase B (319 aa).

Catalysis depends on Asp47, which acts as the Nucleophile.

Belongs to the pseudouridine synthase TruB family. Type 1 subfamily.

It carries out the reaction uridine(55) in tRNA = pseudouridine(55) in tRNA. Its function is as follows. Responsible for synthesis of pseudouridine from uracil-55 in the psi GC loop of transfer RNAs. In Pseudoalteromonas translucida (strain TAC 125), this protein is tRNA pseudouridine synthase B.